The sequence spans 284 residues: Citrate lyase subunit beta-like protein (284 aa).

2 residues coordinate substrate: Arg74 and Glu129. Residues Glu129 and Asp155 each contribute to the Mg(2+) site.

It belongs to the HpcH/HpaI aldolase family. Citrate lyase beta subunit-like subfamily. As to quaternary structure, homotrimer. It depends on Mg(2+) as a cofactor.

Functionally, may play a role in fatty acid biosynthesis. This Deinococcus radiodurans (strain ATCC 13939 / DSM 20539 / JCM 16871 / CCUG 27074 / LMG 4051 / NBRC 15346 / NCIMB 9279 / VKM B-1422 / R1) protein is Citrate lyase subunit beta-like protein.